Consider the following 134-residue polypeptide: MAIDAFLGKWCLISSEGFDEYMKELGVGMAMRKMGSMAKPDVYIIKDGDTITVKTESTFKTSQFSFKLGEKFEENTLDGRKTQTLVSLKDDGSLIQEQEWDGKKTIITRKLVDGQLVVECDMNGIKCVRVYQKA.

The Nuclear localization signal signature appears at 23 to 33 (KELGVGMAMRK). Residues arginine 109 and 129–131 (RVY) contribute to the hexadecanoate site. N-eicosanoyl ethanolamine is bound by residues arginine 109 and tyrosine 131. 129–131 (RVY) provides a ligand contact to (9Z,12Z)-octadecadienoate.

This sequence belongs to the calycin superfamily. Fatty-acid binding protein (FABP) family. As to quaternary structure, monomer.

It localises to the cytoplasm. It is found in the nucleus. Its subcellular location is the synapse. The protein localises to the postsynaptic density. The protein resides in the secreted. The enzyme catalyses hexadecanoate(out) = hexadecanoate(in). It carries out the reaction (9Z,12Z)-octadecadienoate(out) = (9Z,12Z)-octadecadienoate(in). The catalysed reaction is (9Z)-octadecenoate(out) = (9Z)-octadecenoate(in). Intracellular carrier for long-chain fatty acids and related active lipids, such as endocannabinoids, that regulate the metabolism and actions of the ligands they bind. In addition to the cytosolic transport, selectively delivers specific fatty acids from the cytosol to the nucleus, wherein they activate nuclear receptors. Delivers retinoic acid to the nuclear receptor peroxisome proliferator-activated receptor delta; which promotes proliferation and survival. May also serve as a synaptic carrier of endocannabinoid at central synapses and thus controls retrograde endocannabinoid signaling. Modulates inflammation by regulating PTGES induction via NF-kappa-B activation, and prostaglandin E2 (PGE2) biosynthesis during inflammation. Has the highest binding affinity for docosahexaenoic acid (DHA) and decreasing relative affinity for eicosapentaenoic acid (EPA), alpha-linolenic acid (ALA), oleic acid, palmitic acid, linoleic acid and stearic acid, respectively. The sequence is that of Fatty acid-binding protein 5 from Pygoscelis papua (Gentoo penguin).